Consider the following 76-residue polypeptide: Translational regulator CsrA (76 aa).

The protein belongs to the CsrA/RsmA family. In terms of assembly, homodimer; the beta-strands of each monomer intercalate to form a hydrophobic core, while the alpha-helices form wings that extend away from the core.

It localises to the cytoplasm. In terms of biological role, a translational regulator that binds mRNA to regulate translation initiation and/or mRNA stability. Usually binds in the 5'-UTR at or near the Shine-Dalgarno sequence preventing ribosome-binding, thus repressing translation. Its main target seems to be the major flagellin gene, while its function is anatagonized by FliW. This Syntrophomonas wolfei subsp. wolfei (strain DSM 2245B / Goettingen) protein is Translational regulator CsrA.